The sequence spans 410 residues: MTPQLNNLTLPIYMDYQATTPIDPRVMEAMLPYFTTKFGNPHSRSHSFGWEAENAVEEARSMVAKLIGADTKEIIFTSGATESNNLAIKGIAKFYSNKKNHIITVVSEHKCVLDACRHLEQEGIKITYLPIKPNGIIDLETLKNAITDQTMLVSVMVVNNEIGVVQPLKEIGKICREKGVFFHSDIAQGFGKIPIDVNAFNIDLASISGHKIYGPKGIGALYVRKKPRVRITPLINGGGQERGMRSGTLPTPLIVGLGMAAEIAYSEMEKDTKHVNYLFDRFLNNIHKRISEVYLNGDKNQRYKGNLNLSFAGVEGESMILAIKDLAVSSGSACTSASLEPSYVLRSIGIGEELAHTAIRFGIGRFTTEQEVDYAVNLICSKIDKLRALSPLWEMMQEGIDLKKIKWAVH.

Pyridoxal 5'-phosphate contacts are provided by residues 80–81, N160, Q188, and 208–210; these read AT and SGH. Residue K211 is modified to N6-(pyridoxal phosphate)lysine. A pyridoxal 5'-phosphate-binding site is contributed by T248. Residue C334 is the Cysteine persulfide intermediate of the active site. Position 334 (C334) interacts with [2Fe-2S] cluster.

This sequence belongs to the class-V pyridoxal-phosphate-dependent aminotransferase family. NifS/IscS subfamily. Homodimer. Forms a heterotetramer with IscU, interacts with other sulfur acceptors. Requires pyridoxal 5'-phosphate as cofactor.

It localises to the cytoplasm. The catalysed reaction is (sulfur carrier)-H + L-cysteine = (sulfur carrier)-SH + L-alanine. It functions in the pathway cofactor biosynthesis; iron-sulfur cluster biosynthesis. Functionally, master enzyme that delivers sulfur to a number of partners involved in Fe-S cluster assembly, tRNA modification or cofactor biosynthesis. Catalyzes the removal of elemental sulfur atoms from cysteine to produce alanine. Functions as a sulfur delivery protein for Fe-S cluster synthesis onto IscU, an Fe-S scaffold assembly protein, as well as other S acceptor proteins. The sequence is that of Cysteine desulfurase IscS from Rickettsia rickettsii (strain Iowa).